Here is a 392-residue protein sequence, read N- to C-terminus: uncharacterized protein (392 aa).

It belongs to the peptidase M24 family.

This is an uncharacterized protein from Sinorhizobium fredii (strain NBRC 101917 / NGR234).